The following is a 147-amino-acid chain: D-aminoacyl-tRNA deacylase (147 aa).

Residues 136-137 (GP) carry the Gly-cisPro motif, important for rejection of L-amino acids motif.

It belongs to the DTD family. In terms of assembly, homodimer.

The protein resides in the cytoplasm. It catalyses the reaction glycyl-tRNA(Ala) + H2O = tRNA(Ala) + glycine + H(+). The enzyme catalyses a D-aminoacyl-tRNA + H2O = a tRNA + a D-alpha-amino acid + H(+). In terms of biological role, an aminoacyl-tRNA editing enzyme that deacylates mischarged D-aminoacyl-tRNAs. Also deacylates mischarged glycyl-tRNA(Ala), protecting cells against glycine mischarging by AlaRS. Acts via tRNA-based rather than protein-based catalysis; rejects L-amino acids rather than detecting D-amino acids in the active site. By recycling D-aminoacyl-tRNA to D-amino acids and free tRNA molecules, this enzyme counteracts the toxicity associated with the formation of D-aminoacyl-tRNA entities in vivo and helps enforce protein L-homochirality. This Streptococcus uberis (strain ATCC BAA-854 / 0140J) protein is D-aminoacyl-tRNA deacylase.